Consider the following 1342-residue polypeptide: DNA-directed RNA polymerase subunit beta (1342 aa).

Belongs to the RNA polymerase beta chain family. The RNAP catalytic core consists of 2 alpha, 1 beta, 1 beta' and 1 omega subunit. When a sigma factor is associated with the core the holoenzyme is formed, which can initiate transcription.

The catalysed reaction is RNA(n) + a ribonucleoside 5'-triphosphate = RNA(n+1) + diphosphate. Functionally, DNA-dependent RNA polymerase catalyzes the transcription of DNA into RNA using the four ribonucleoside triphosphates as substrates. The polypeptide is DNA-directed RNA polymerase subunit beta (Yersinia pseudotuberculosis serotype O:1b (strain IP 31758)).